The chain runs to 485 residues: UDP-N-acetylmuramoyl-L-alanyl-D-glutamate--2,6-diaminopimelate ligase (485 aa).

UDP-N-acetyl-alpha-D-muramoyl-L-alanyl-D-glutamate-binding residues include L27 and S29. 106–112 contributes to the ATP binding site; it reads GTSGKTS. Residues 148–149, S175, Q181, and R183 each bind UDP-N-acetyl-alpha-D-muramoyl-L-alanyl-D-glutamate; that span reads TT. K215 bears the N6-carboxylysine mark. Meso-2,6-diaminopimelate-binding positions include R382, 406–409, G454, and E458; that span reads DNPR. The short motif at 406–409 is the Meso-diaminopimelate recognition motif element; the sequence is DNPR.

This sequence belongs to the MurCDEF family. MurE subfamily. Requires Mg(2+) as cofactor. Carboxylation is probably crucial for Mg(2+) binding and, consequently, for the gamma-phosphate positioning of ATP.

The protein resides in the cytoplasm. It carries out the reaction UDP-N-acetyl-alpha-D-muramoyl-L-alanyl-D-glutamate + meso-2,6-diaminopimelate + ATP = UDP-N-acetyl-alpha-D-muramoyl-L-alanyl-gamma-D-glutamyl-meso-2,6-diaminopimelate + ADP + phosphate + H(+). It functions in the pathway cell wall biogenesis; peptidoglycan biosynthesis. Functionally, catalyzes the addition of meso-diaminopimelic acid to the nucleotide precursor UDP-N-acetylmuramoyl-L-alanyl-D-glutamate (UMAG) in the biosynthesis of bacterial cell-wall peptidoglycan. This chain is UDP-N-acetylmuramoyl-L-alanyl-D-glutamate--2,6-diaminopimelate ligase, found in Bradyrhizobium diazoefficiens (strain JCM 10833 / BCRC 13528 / IAM 13628 / NBRC 14792 / USDA 110).